The following is a 208-amino-acid chain: Dephospho-CoA kinase (208 aa).

Residues 3–208 (EIGLTGGIGS…ALSAAGVTQA (206 aa)) form the DPCK domain. 11–16 (GSGKTR) contacts ATP.

It belongs to the CoaE family.

The protein localises to the cytoplasm. It catalyses the reaction 3'-dephospho-CoA + ATP = ADP + CoA + H(+). The protein operates within cofactor biosynthesis; coenzyme A biosynthesis; CoA from (R)-pantothenate: step 5/5. Its function is as follows. Catalyzes the phosphorylation of the 3'-hydroxyl group of dephosphocoenzyme A to form coenzyme A. In Cupriavidus pinatubonensis (strain JMP 134 / LMG 1197) (Cupriavidus necator (strain JMP 134)), this protein is Dephospho-CoA kinase.